A 262-amino-acid polypeptide reads, in one-letter code: Protein FLOURY 2 (262 aa).

An N-terminal signal peptide occupies residues 1 to 21; sequence MATKILALLALLALLVSATNA.

It belongs to the zein family.

Its subcellular location is the endoplasmic reticulum membrane. In terms of biological role, zeins are major seed storage proteins. The chain is Protein FLOURY 2 from Zea mays (Maize).